A 732-amino-acid chain; its full sequence is Exonuclease 1 (732 aa).

Residues 1–99 (MGITGLIPFV…KRRRDSRKQS (99 aa)) are N-domain. 7 residues coordinate Mg(2+): D30, D78, E150, D152, D171, D173, and D226. The segment at 138-230 (RSRNVDCIVA…ILSGCDYLDS (93 aa)) is I-domain. Disordered stretches follow at residues 422–471 (YSFK…QRSP), 524–625 (DEQT…TNST), and 661–716 (SCSS…VSQN). 2 positions are modified to phosphoserine: S431 and S433. Positions 432-442 (PSREDSVDQER) are enriched in basic and acidic residues. T443 is subject to Phosphothreonine. S447 carries the post-translational modification Phosphoserine. 2 stretches are compositionally biased toward basic and acidic residues: residues 457-467 (FAKERTGEEAN) and 525-537 (EQTR…LRDT). Composition is skewed to polar residues over residues 572 to 593 (RCSS…SLLE) and 608 to 625 (DLNN…TNST). Positions 661-677 (SCSSDQRASSTSSSSQQ) are enriched in low complexity. The span at 703–716 (KSRTNGKLGAVSQN) shows a compositional bias: polar residues.

It belongs to the XPG/RAD2 endonuclease family. EXO1 subfamily. Requires Mg(2+) as cofactor. In terms of tissue distribution, specifically expressed in the female germline.

The protein resides in the nucleus. 5'-&gt;3' double-stranded DNA exonuclease which may also contain a cryptic 3'-&gt;5' double-stranded DNA exonuclease activity. Also exhibits endonuclease activity against 5'-overhanging flap structures similar to those generated by displacement synthesis when DNA polymerase encounters the 5'-end of a downstream Okazaki fragment. Required for DNA mismatch repair (MMR). In Drosophila melanogaster (Fruit fly), this protein is Exonuclease 1 (tos).